Reading from the N-terminus, the 375-residue chain is Chaperone protein DnaJ (375 aa).

Residues 4 to 68 form the J domain; it reads DYYEVLGVGK…QKRAQYDRFG (65 aa). The segment at 129-211 adopts a CR-type zinc-finger fold; sequence GKETDVEIPK…CRGSGRVKVR (83 aa). 8 residues coordinate Zn(2+): Cys142, Cys145, Cys159, Cys162, Cys185, Cys188, Cys199, and Cys202. CXXCXGXG motif repeat units follow at residues 142–149, 159–166, 185–192, and 199–206; these read CDTCHGSG, CKTCSGTG, CTTCEGKG, and CSSCRGSG. Residues 349–375 are disordered; it reads LSGEKPGQHGGEDEGFFEKMKRAFRGE.

This sequence belongs to the DnaJ family. As to quaternary structure, homodimer. The cofactor is Zn(2+).

The protein localises to the cytoplasm. Functionally, participates actively in the response to hyperosmotic and heat shock by preventing the aggregation of stress-denatured proteins and by disaggregating proteins, also in an autonomous, DnaK-independent fashion. Unfolded proteins bind initially to DnaJ; upon interaction with the DnaJ-bound protein, DnaK hydrolyzes its bound ATP, resulting in the formation of a stable complex. GrpE releases ADP from DnaK; ATP binding to DnaK triggers the release of the substrate protein, thus completing the reaction cycle. Several rounds of ATP-dependent interactions between DnaJ, DnaK and GrpE are required for fully efficient folding. Also involved, together with DnaK and GrpE, in the DNA replication of plasmids through activation of initiation proteins. This Brevibacillus choshinensis protein is Chaperone protein DnaJ.